We begin with the raw amino-acid sequence, 359 residues long: Peptide chain release factor 1 (359 aa).

Glutamine 236 is subject to N5-methylglutamine.

This sequence belongs to the prokaryotic/mitochondrial release factor family. In terms of processing, methylated by PrmC. Methylation increases the termination efficiency of RF1.

The protein localises to the cytoplasm. Peptide chain release factor 1 directs the termination of translation in response to the peptide chain termination codons UAG and UAA. The chain is Peptide chain release factor 1 from Streptococcus pneumoniae serotype 4 (strain ATCC BAA-334 / TIGR4).